The sequence spans 525 residues: GMP synthase [glutamine-hydrolyzing] (525 aa).

The region spanning 13–202 is the Glutamine amidotransferase type-1 domain; that stretch reads TILVLDFGSQ…AVDLCHAKQN (190 aa). Catalysis depends on Cys89, which acts as the Nucleophile. Active-site residues include His176 and Glu178. The GMPS ATP-PPase domain occupies 203–400; it reads WTMKNFIGTE…LGISHELVWR (198 aa). 231–237 serves as a coordination point for ATP; sequence SGGVDST. Residues Arg304, Asp462, Lys517, and Glu523 each contribute to the XMP site.

In terms of assembly, homodimer. Requires Mg(2+) as cofactor.

Its subcellular location is the cytoplasm. The protein resides in the cytosol. The enzyme catalyses XMP + L-glutamine + ATP + H2O = GMP + L-glutamate + AMP + diphosphate + 2 H(+). It participates in purine metabolism; GMP biosynthesis; GMP from XMP (L-Gln route): step 1/1. In terms of biological role, catalyzes the conversion of xanthine monophosphate (XMP) to GMP in the presence of glutamine and ATP through an adenyl-XMP intermediate. The protein is GMP synthase [glutamine-hydrolyzing] (GUA1) of Candida glabrata (strain ATCC 2001 / BCRC 20586 / JCM 3761 / NBRC 0622 / NRRL Y-65 / CBS 138) (Yeast).